We begin with the raw amino-acid sequence, 172 residues long: Photosystem I assembly protein Ycf3 (172 aa).

TPR repeat units follow at residues 35–70 (AFTY…EIDP), 74–107 (SYIL…NPFL), and 122–155 (GERA…TPGN).

It belongs to the Ycf3 family.

The protein resides in the plastid. It localises to the chloroplast thylakoid membrane. Functionally, essential for the assembly of the photosystem I (PSI) complex. May act as a chaperone-like factor to guide the assembly of the PSI subunits. In Dioscorea elephantipes (Elephant's foot yam), this protein is Photosystem I assembly protein Ycf3.